The sequence spans 369 residues: Tyrosine-protein phosphatase non-receptor type 5 (369 aa).

Residue Ser-49 is modified to Phosphoserine; by PKA. Residue Thr-59 is modified to Phosphothreonine; by MAPK. Ser-72 bears the Phosphoserine; by MAPK mark. A Tyrosine-protein phosphatase domain is found at 104 to 359 (LQAEFFEIPM…QFVHHAMSLY (256 aa)). Residues Asp-265, 300–306 (CSAGIGR), and Gln-344 each bind substrate. The Phosphocysteine intermediate role is filled by Cys-300.

This sequence belongs to the protein-tyrosine phosphatase family. Non-receptor class subfamily. Phosphorylation at Ser-49 by PKA deactivates PTPN5. Phosphorylation at Thr-59 and Ser-72 by MAPKs stabilizes the phosphatase, dephosphorylation of these sites results in ubiquitin-mediated degradation of the active phosphatase. Expressed in the central nervous system except in the cerebellum. Enriched within the striatum relative to other brain areas.

The protein resides in the cytoplasm. The catalysed reaction is O-phospho-L-tyrosyl-[protein] + H2O = L-tyrosyl-[protein] + phosphate. Functionally, may regulate the activity of several effector molecules involved in synaptic plasticity and neuronal cell survival, including MAPKs, Src family kinases and NMDA receptors. This chain is Tyrosine-protein phosphatase non-receptor type 5 (Ptpn5), found in Rattus norvegicus (Rat).